The sequence spans 303 residues: Ribosomal RNA small subunit methyltransferase H (303 aa).

S-adenosyl-L-methionine-binding positions include 33–35 (GGH), aspartate 52, phenylalanine 79, aspartate 97, and glutamine 104.

It belongs to the methyltransferase superfamily. RsmH family.

The protein localises to the cytoplasm. It catalyses the reaction cytidine(1402) in 16S rRNA + S-adenosyl-L-methionine = N(4)-methylcytidine(1402) in 16S rRNA + S-adenosyl-L-homocysteine + H(+). Specifically methylates the N4 position of cytidine in position 1402 (C1402) of 16S rRNA. The sequence is that of Ribosomal RNA small subunit methyltransferase H from Wolinella succinogenes (strain ATCC 29543 / DSM 1740 / CCUG 13145 / JCM 31913 / LMG 7466 / NCTC 11488 / FDC 602W) (Vibrio succinogenes).